The chain runs to 205 residues: MQWQTKLPLIAILRGITPDEALAHVGAVIDAGFDAVEIPLNSPQWEQSIPAIVDAYGDKALIGAGTVLKPEQVDALARMGCQLIVTPNIHSEVIRRAVGYGMTVCPGCATATEAFTALEAGAQALKIFPSSAFGPQYIKALKAVLPSDIAVFAVGGVTPENLAQWIDAGCAGAGLGSDLYRAGQSVERTAQQAAAFVKAYREAVQ.

Position 14 (Arg-14) interacts with 2-dehydro-3-deoxy-6-phospho-D-galactonate. Catalysis depends on Glu-37, which acts as the Proton donor/acceptor. Residues Thr-66, Lys-126, Gly-156, Gly-176, and Ser-177 each contribute to the 2-dehydro-3-deoxy-6-phospho-D-galactonate site. Residue Lys-126 is the Schiff-base intermediate with substrate of the active site.

It belongs to the KHG/KDPG aldolase family. In terms of assembly, homotrimer.

It catalyses the reaction 2-dehydro-3-deoxy-6-phospho-D-galactonate = D-glyceraldehyde 3-phosphate + pyruvate. Its pathway is carbohydrate acid metabolism; D-galactonate degradation; D-glyceraldehyde 3-phosphate and pyruvate from D-galactonate: step 3/3. In terms of biological role, involved in the degradation of galactose via the DeLey-Doudoroff pathway. Catalyzes the reversible, stereospecific retro-aldol cleavage of 2-keto-3-deoxy-6-phosphogalactonate (KDPGal) to pyruvate and D-glyceraldehyde-3-phosphate. In the synthetic direction, it catalyzes the addition of pyruvate to electrophilic aldehydes with re-facial selectivity. It can use a limited number of aldehyde substrates, including D-glyceraldehyde-3-phosphate (natural substrate), D-glyceraldehyde, glycolaldehyde, 2-pyridinecarboxaldehyde, D-ribose, D-erythrose and D-threose. It efficiently catalyzes aldol addition only using pyruvate as the nucleophilic component and accepts both stereochemical configurations at C2 of the electrophile. The chain is 2-dehydro-3-deoxy-6-phosphogalactonate aldolase (dgoA) from Escherichia coli (strain K12).